Reading from the N-terminus, the 183-residue chain is Adenine phosphoribosyltransferase (183 aa).

This sequence belongs to the purine/pyrimidine phosphoribosyltransferase family. In terms of assembly, homodimer.

It localises to the cytoplasm. The enzyme catalyses AMP + diphosphate = 5-phospho-alpha-D-ribose 1-diphosphate + adenine. Its pathway is purine metabolism; AMP biosynthesis via salvage pathway; AMP from adenine: step 1/1. In terms of biological role, catalyzes a salvage reaction resulting in the formation of AMP, that is energically less costly than de novo synthesis. The sequence is that of Adenine phosphoribosyltransferase from Shewanella oneidensis (strain ATCC 700550 / JCM 31522 / CIP 106686 / LMG 19005 / NCIMB 14063 / MR-1).